The chain runs to 246 residues: MDAFIRVANQSQGRDRLFRATQHACMLLRYLLESKAGKEAVVTKLKNLETSVSTGRKWFRLGNVLHAIQATEQSIQATDLVPRLCLTLANLNRVVYYICDTVLWAKSVGLTSGINREKWQMRAARHYYYFLLLSLVRDLYEVLLHMGQVARDRAKREKSSGDPPKYSVANEESEWLQSFLLLLFQSLKRNPPLFLDTVKNFCDILIPLNQLGIYKSNLGVVGFGGLVSSVAGLITVVYPQLKLKAR.

Over 1-93 the chain is Cytoplasmic; the sequence is MDAFIRVANQ…LCLTLANLNR (93 aa). A helical transmembrane segment spans residues 94-114; it reads VVYYICDTVLWAKSVGLTSGI. At 115–217 the chain is on the lumenal side; sequence NREKWQMRAA…LNQLGIYKSN (103 aa). The helical transmembrane segment at 218-238 threads the bilayer; it reads LGVVGFGGLVSSVAGLITVVY. The interval 218-238 is required for homodimerization, interaction with PEX11G, and peroxisomal localization; it reads LGVVGFGGLVSSVAGLITVVY. The Cytoplasmic segment spans residues 239–246; that stretch reads PQLKLKAR.

It belongs to the peroxin-11 family. Homodimer. Heterodimer with PEX11G. Probably interacts with COPB2 and COPA. Interacts with PEX19. Interacts with FIS1. As to expression, expressed at high levels in kidney, liver, lung, brain, and testis and at low levels in heart, spleen and skeletal muscle.

It is found in the peroxisome membrane. Its function is as follows. May be involved in peroxisomal proliferation and may regulate peroxisomes division. May mediate binding of coatomer proteins to the peroxisomal membrane. Promotes membrane protrusion and elongation on the peroxisomal surface. The protein is Peroxisomal membrane protein 11A (Pex11a) of Rattus norvegicus (Rat).